The primary structure comprises 251 residues: V-set and transmembrane domain-containing protein 2B (251 aa).

The first 25 residues, 1-25 (MEKQGLFSALCYLMLNTPLLFSVNA), serve as a signal peptide directing secretion. The region spanning 26-142 (TFTEVPKDVT…DETQEHKAQA (117 aa)) is the Ig-like V-type domain. The Extracellular segment spans residues 26–226 (TFTEVPKDVT…RQQHGSGTGP (201 aa)). C46 and C125 are joined by a disulfide. The segment at 157-213 (AAEAVSHIQSSGPRRNNPSSRATPEPGNKRAVPPAENLAPSLSTAASSSASPAPGKA) is disordered. Low complexity-rich tracts occupy residues 166–177 (SSGPRRNNPSSR) and 195–213 (APSL…PGKA). A helical transmembrane segment spans residues 227–247 (IFANDPALYMFLLIFHQLVYL). The Cytoplasmic segment spans residues 248 to 251 (LLNH).

The protein resides in the membrane. The protein is V-set and transmembrane domain-containing protein 2B (vstm2b) of Xenopus tropicalis (Western clawed frog).